The sequence spans 773 residues: E3 ubiquitin-protein ligase msl-2 (773 aa).

Zn(2+)-binding residues include C41, C44, C59, H61, C64, C67, C78, and C84. An RING-type zinc finger spans residues 41 to 85 (CVVCCQLLVDPYSPKGKRCQHNVCRLCLRGKKHLFPSCTQCEGCS). Residues 424-468 (VQTELQDAESLQKDFEDAKAAAEEAKEKEKDLHAISAELQKEDSD) are a coiled coil. A disordered region spans residues 460–525 (AELQKEDSDE…EKVKPPKPKC (66 aa)). Positions 520-571 (PPKPKCRCGISGSSNTLTTCRNSRCPCYKSYNSCAGCHCVCCKNPHKEDYVE) constitute a CXC MSL2-type domain. C525, C527, C539, C544, C546, C553, C556, C558, and C561 together coordinate Zn(2+). Residues 571–773 (ESDEDDDLED…EEIMSGSDDL (203 aa)) are C-terminal disordered region (CTD). The span at 572–581 (SDEDDDLEDF) shows a compositional bias: acidic residues. The tract at residues 572–616 (SDEDDDLEDFEMPKDVPEPMTQSEEPVVAEPRQEENSMAPPDSSA) is disordered. The clamp-binding domain (CBD) stretch occupies residues 620 to 685 (LVPLNNLQQS…SLPQYAYIMP (66 aa)). The pro/Bas region stretch occupies residues 650–708 (QGSKPLDPVTVGFTIRVQLQHTDGFGSLPQYAYIMPTIDPPNPPAPSLSPPPPPAPDRE). Residues 687–704 (IDPPNPPAPSLSPPPPPA) are compositionally biased toward pro residues. The disordered stretch occupies residues 687–773 (IDPPNPPAPS…EEIMSGSDDL (87 aa)). The segment covering 705 to 714 (PDREVIEPPA) has biased composition (basic and acidic residues). The segment covering 715-726 (KKFRTSRTRRGR) has biased composition (basic residues). The span at 742–759 (GSRSNSAAGDRSSATDNA) shows a compositional bias: polar residues.

This sequence belongs to the MSL2 family. As to quaternary structure, component of the male-specific lethal (MSL) histone acetyltransferase complex, composed of mof, mle, msl-1, msl-2 and msl-3 proteins, as well as roX1 and roX2 non-coding RNAs. When not associated with chromatin, the MSL complex associates with msl-2 mRNAs, possibly to regulate the amount of available MSL complex. Interacts with Clamp; promoting cooperative binding to DNA PionX sites and recruitment of the MSL complex to chromatin. In terms of processing, autoubiquitinated.

It localises to the nucleus. Its subcellular location is the chromosome. The enzyme catalyses S-ubiquitinyl-[E2 ubiquitin-conjugating enzyme]-L-cysteine + [acceptor protein]-L-lysine = [E2 ubiquitin-conjugating enzyme]-L-cysteine + N(6)-ubiquitinyl-[acceptor protein]-L-lysine.. Its pathway is protein modification; protein ubiquitination. Functionally, limiting component of the male-specific lethal (MSL) histone acetyltransferase complex, a multiprotein complex essential for elevating transcription of the single X chromosome in the male (X chromosome dosage compensation). The MSL complex specifically associates with the single X chromosome in males and mediates formation of H4K16ac, promoting a two-fold activation of X chromosome. Msl-2 is only produced in males, constituting the limiting component of the MSL complex. Within the MSL complex, msl-2 mediates the selective binding to the X chromosome and recruitment of the MSL complex via two different mechanisms. Recognizes DNA motifs that are enriched on X chromosome, named PionX sites, which are characterized by sequence features and distinct DNA conformation (base roll). Specific recognition of the X chromosome is also mediated by the formation of a gel-like state: msl-2 undergoes liquid-liquid phase separation upon binding to roX1 and roX2 non-coding RNAs, leading to nucleate the MSL complex on the X chromosome. Msl-2 is also required for translation and/or stability of msl-1 in males. Also acts as an E3 ubiquitin ligase: in complex with msl-1, mediates ubiquitination of histone H2B at 'Lys-34' (H2BK34Ub). Also catalyzes ubiquitination of msl-1, msl-3 and mof components of the MSL complex. The chain is E3 ubiquitin-protein ligase msl-2 from Drosophila melanogaster (Fruit fly).